A 72-amino-acid polypeptide reads, in one-letter code: PAMP-induced secreted peptide 1 (72 aa).

Positions 1–30 are cleaved as a signal peptide; the sequence is MRRVSWSTVLIVVVMVSLFFVEHVVVPAAA. Residues Pro65 and Pro67 each carry the 4-hydroxyproline modification.

In terms of processing, contains 4-hydroxyproline; hydroxylated on Pro-65 and Pro-67. In terms of tissue distribution, expressed in guard cells, hydathodes, leaf trichomes, and vascular tissues of leaves and roots.

The protein resides in the secreted. The protein localises to the extracellular space. Its subcellular location is the apoplast. Its function is as follows. Endogenous secreted peptide that acts as elicitor of immune response and positive regulator of defense response. Amplifies the immune response triggered by flg22, the active epitope of bacterial flagellin. Acts as a negative regulator of root growth. The chain is PAMP-induced secreted peptide 1 from Arabidopsis thaliana (Mouse-ear cress).